Reading from the N-terminus, the 500-residue chain is Taxoid 7-beta-hydroxylase (500 aa).

The helical transmembrane segment at 24-44 (PAILSTALTAIAGIIVLLVIT) threads the bilayer. C446 contacts heme.

Belongs to the cytochrome P450 family.

It localises to the microsome membrane. It carries out the reaction taxusin + reduced [NADPH--hemoprotein reductase] + O2 = 7beta-hydroxytaxusin + oxidized [NADPH--hemoprotein reductase] + H2O + H(+). The catalysed reaction is 2alpha-hydroxytaxusin + reduced [NADPH--hemoprotein reductase] + O2 = 2alpha,7beta-dihydroxytaxusin + oxidized [NADPH--hemoprotein reductase] + H2O + H(+). It catalyses the reaction 7beta-hydroxytaxusin + reduced [NADPH--hemoprotein reductase] + O2 = 2alpha,7beta-dihydroxytaxusin + oxidized [NADPH--hemoprotein reductase] + H2O + H(+). It participates in alkaloid biosynthesis; taxol biosynthesis. In terms of biological role, catalyzes the conversion of taxusin to 7-beta-hydroxytaxusin in taxol biosynthesis. Catalyzes the conversion of 2-alpha-hydroxytaxusin to 2-alpha-7-beta-hydroxytaxusin in taxol biosynthesis. This is Taxoid 7-beta-hydroxylase from Taxus cuspidata (Japanese yew).